Reading from the N-terminus, the 757-residue chain is Elongation factor G, mitochondrial (757 aa).

Residues 66–344 (DRMRNIGISA…VLDYLPCPME (279 aa)) enclose the tr-type G domain. Residues 75-82 (AHIDSGKT), 142-146 (DTPGH), and 196-199 (NKLD) each bind GTP.

The protein belongs to the TRAFAC class translation factor GTPase superfamily. Classic translation factor GTPase family. EF-G/EF-2 subfamily.

It localises to the mitochondrion. Its pathway is protein biosynthesis; polypeptide chain elongation. In terms of biological role, mitochondrial GTPase that catalyzes the GTP-dependent ribosomal translocation step during translation elongation. During this step, the ribosome changes from the pre-translocational (PRE) to the post-translocational (POST) state as the newly formed A-site-bound peptidyl-tRNA and P-site-bound deacylated tRNA move to the P and E sites, respectively. Catalyzes the coordinated movement of the two tRNA molecules, the mRNA and conformational changes in the ribosome. The polypeptide is Elongation factor G, mitochondrial (Oryza sativa subsp. japonica (Rice)).